Consider the following 125-residue polypeptide: Small ribosomal subunit protein uS11m (125 aa).

The protein belongs to the universal ribosomal protein uS11 family.

The protein resides in the mitochondrion. In Marchantia polymorpha (Common liverwort), this protein is Small ribosomal subunit protein uS11m (RPS11).